A 159-amino-acid chain; its full sequence is Nucleotide-binding protein PSPA7_4966 (159 aa).

This sequence belongs to the YajQ family.

In terms of biological role, nucleotide-binding protein. The chain is Nucleotide-binding protein PSPA7_4966 from Pseudomonas paraeruginosa (strain DSM 24068 / PA7) (Pseudomonas aeruginosa (strain PA7)).